Reading from the N-terminus, the 167-residue chain is tRNA-specific adenosine deaminase (167 aa).

Positions 6–117 (FSHEYWMRHA…DAKTGAAGSL (112 aa)) constitute a CMP/dCMP-type deaminase domain. A Zn(2+)-binding site is contributed by H57. E59 (proton donor) is an active-site residue. C87 and C90 together coordinate Zn(2+).

The protein belongs to the cytidine and deoxycytidylate deaminase family. In terms of assembly, homodimer. Zn(2+) serves as cofactor.

The enzyme catalyses adenosine(34) in tRNA + H2O + H(+) = inosine(34) in tRNA + NH4(+). Its function is as follows. Catalyzes the deamination of adenosine to inosine at the wobble position 34 of tRNA(Arg2). Essential for cell viability. The sequence is that of tRNA-specific adenosine deaminase from Escherichia coli (strain K12).